Consider the following 241-residue polypeptide: Ubiquinone biosynthesis O-methyltransferase (241 aa).

S-adenosyl-L-methionine-binding residues include arginine 44, glycine 64, aspartate 85, and methionine 129.

This sequence belongs to the methyltransferase superfamily. UbiG/COQ3 family.

It carries out the reaction a 3-demethylubiquinol + S-adenosyl-L-methionine = a ubiquinol + S-adenosyl-L-homocysteine + H(+). It catalyses the reaction a 3-(all-trans-polyprenyl)benzene-1,2-diol + S-adenosyl-L-methionine = a 2-methoxy-6-(all-trans-polyprenyl)phenol + S-adenosyl-L-homocysteine + H(+). The protein operates within cofactor biosynthesis; ubiquinone biosynthesis. O-methyltransferase that catalyzes the 2 O-methylation steps in the ubiquinone biosynthetic pathway. The sequence is that of Ubiquinone biosynthesis O-methyltransferase from Serratia proteamaculans (strain 568).